Consider the following 108-residue polypeptide: Transmembrane protein 141 (108 aa).

Helical transmembrane passes span 32-52 (MKGVFTFVTGTGMAFGLQMFI) and 58-78 (YPLQWSLLVAVVAGSVVSYGV).

It belongs to the TMEM141 family.

The protein resides in the membrane. This is Transmembrane protein 141 (TMEM141) from Homo sapiens (Human).